The chain runs to 434 residues: Histidinol dehydrogenase (434 aa).

NAD(+) contacts are provided by Tyr130, Gln188, and Asn211. Residues Ser237, Gln259, and His262 each coordinate substrate. The Zn(2+) site is built by Gln259 and His262. Catalysis depends on proton acceptor residues Glu326 and His327. 4 residues coordinate substrate: His327, Asp360, Glu414, and His419. Asp360 is a binding site for Zn(2+). His419 serves as a coordination point for Zn(2+).

The protein belongs to the histidinol dehydrogenase family. As to quaternary structure, homodimer. Zn(2+) is required as a cofactor.

The enzyme catalyses L-histidinol + 2 NAD(+) + H2O = L-histidine + 2 NADH + 3 H(+). Its pathway is amino-acid biosynthesis; L-histidine biosynthesis; L-histidine from 5-phospho-alpha-D-ribose 1-diphosphate: step 9/9. Its function is as follows. Catalyzes the sequential NAD-dependent oxidations of L-histidinol to L-histidinaldehyde and then to L-histidine. The polypeptide is Histidinol dehydrogenase (Escherichia coli (strain K12)).